We begin with the raw amino-acid sequence, 166 residues long: Coiled-coil domain-containing protein 12 (166 aa).

Met1 carries the N-acetylmethionine modification. The disordered stretch occupies residues 1–56 (MEATTAGVGRLEEEALRRKERLKALREKTGRKDKEDGEPKTKHLREEEEEGEKHRE). Residues 8-28 (VGRLEEEALRRKERLKALREK) adopt a coiled-coil conformation. The segment covering 10–56 (RLEEEALRRKERLKALREKTGRKDKEDGEPKTKHLREEEEEGEKHRE) has biased composition (basic and acidic residues). The residue at position 53 (Lys53) is an N6-acetyllysine. Lys94 participates in a covalent cross-link: Glycyl lysine isopeptide (Lys-Gly) (interchain with G-Cter in SUMO2). A coiled-coil region spans residues 117–144 (KRDVAKKLEKLKKRTQRAIAELIRERLK). The segment at 147-166 (EDSLASAVDAATEQKTCDSD) is disordered. Phosphoserine is present on residues Ser149 and Ser165.

The sequence is that of Coiled-coil domain-containing protein 12 (CCDC12) from Homo sapiens (Human).